Reading from the N-terminus, the 436-residue chain is MQGTPGGGTRPGPSPVDRRTLLVFSFILAAALGQMNFTGDQVLRVLAKDEKQLSLLGDLEGLKPQKVDFWRGPARPSLPVDMRVPFSELKDIKAYLESHGLAYSIMIKDIQVLLDEERQAMAKSRRLERSTNSFSYSSYHTLEEIYSWIDNFVMEHSDIVSKIQIGNSFENQSILVLKFSTGGSRHPAIWIDTGIHSREWITHATGIWTANKIVSDYGKDRVLTDILNAMDIFIELVTNPDGFAFTHSMNRLWRKNKSIRPGIFCIGVDLNRNWKSGFGGNGSNSNPCSETYHGPSPQSEPEVAAIVNFITAHGNFKALISIHSYSQMLMYPYGRLLEPVSNQRELYDLAKDAVEALYKVHGIEYIFGSISTTLYVASGITVDWAYDSGIKYAFSFELRDTGQYGFLLPATQIIPTAQETWMALRTIMEHTLNHPY.

The N-terminal stretch at 1 to 33 (MQGTPGGGTRPGPSPVDRRTLLVFSFILAAALG) is a signal peptide. Residues 34–126 (QMNFTGDQVL…ERQAMAKSRR (93 aa)) constitute a propeptide, activation peptide. Residues 138-431 (SYHTLEEIYS…MALRTIMEHT (294 aa)) form the Peptidase M14 domain. The Zn(2+) site is built by His196 and Glu199. Substrate is bound by residues 196–199 (HSRE), Arg254, and 271–272 (NR). A disulfide bridge connects residues Cys265 and Cys288. His323 provides a ligand contact to Zn(2+). Residues 324 to 325 (SY) and Tyr375 contribute to the substrate site. Glu397 (proton donor/acceptor) is an active-site residue.

The protein belongs to the peptidase M14 family. Zn(2+) is required as a cofactor. In terms of tissue distribution, expression is very low or not detectable.

Its subcellular location is the secreted. The polypeptide is Carboxypeptidase A5 (CPA5) (Homo sapiens (Human)).